We begin with the raw amino-acid sequence, 320 residues long: Taurine-binding periplasmic protein (320 aa).

Residues 1 to 22 (MAISSRNTLLAALAFIAFQAQA) form the signal peptide.

The protein belongs to the bacterial solute-binding protein SsuA/TauA family.

Its subcellular location is the periplasm. Part of a binding-protein-dependent transport system for taurine. This Escherichia coli (strain K12) protein is Taurine-binding periplasmic protein (tauA).